The sequence spans 211 residues: Ferric nitrobindin-like protein (211 aa).

A GXWXGXG motif is present at residues Gly-21 to Gly-27. The disordered stretch occupies residues Gly-104–Ser-130.

This sequence belongs to the nitrobindin family.

The sequence is that of Ferric nitrobindin-like protein from Beutenbergia cavernae (strain ATCC BAA-8 / DSM 12333 / CCUG 43141 / JCM 11478 / NBRC 16432 / NCIMB 13614 / HKI 0122).